The chain runs to 659 residues: Pesticidal crystal protein Cry3Ba (659 aa).

The disordered stretch occupies residues 1-41; sequence MIRMGGRKMNPNNRSEYDTIKVTPNSELPTNHNQYPLADNP. Positions 22–41 are enriched in polar residues; the sequence is VTPNSELPTNHNQYPLADNP.

This sequence belongs to the delta endotoxin family.

Promotes colloidosmotic lysis by binding to the midgut epithelial cells of Coleoptera. The sequence is that of Pesticidal crystal protein Cry3Ba (cry3Ba) from Bacillus thuringiensis subsp. tolworthi.